Here is a 468-residue protein sequence, read N- to C-terminus: ATP synthase subunit beta (468 aa).

153–160 (GGAGVGKT) lines the ATP pocket.

Belongs to the ATPase alpha/beta chains family. As to quaternary structure, F-type ATPases have 2 components, CF(1) - the catalytic core - and CF(0) - the membrane proton channel. CF(1) has five subunits: alpha(3), beta(3), gamma(1), delta(1), epsilon(1). CF(0) has three main subunits: a(1), b(2) and c(9-12). The alpha and beta chains form an alternating ring which encloses part of the gamma chain. CF(1) is attached to CF(0) by a central stalk formed by the gamma and epsilon chains, while a peripheral stalk is formed by the delta and b chains.

It localises to the cell membrane. It catalyses the reaction ATP + H2O + 4 H(+)(in) = ADP + phosphate + 5 H(+)(out). In terms of biological role, produces ATP from ADP in the presence of a proton gradient across the membrane. The catalytic sites are hosted primarily by the beta subunits. This chain is ATP synthase subunit beta, found in Ligilactobacillus salivarius (strain UCC118) (Lactobacillus salivarius).